The primary structure comprises 326 residues: Lipoyl synthase (326 aa).

[4Fe-4S] cluster is bound by residues cysteine 74, cysteine 79, cysteine 85, cysteine 100, cysteine 104, cysteine 107, and serine 314. The region spanning cysteine 85–serine 303 is the Radical SAM core domain.

It belongs to the radical SAM superfamily. Lipoyl synthase family. It depends on [4Fe-4S] cluster as a cofactor.

The protein localises to the cytoplasm. It carries out the reaction [[Fe-S] cluster scaffold protein carrying a second [4Fe-4S](2+) cluster] + N(6)-octanoyl-L-lysyl-[protein] + 2 oxidized [2Fe-2S]-[ferredoxin] + 2 S-adenosyl-L-methionine + 4 H(+) = [[Fe-S] cluster scaffold protein] + N(6)-[(R)-dihydrolipoyl]-L-lysyl-[protein] + 4 Fe(3+) + 2 hydrogen sulfide + 2 5'-deoxyadenosine + 2 L-methionine + 2 reduced [2Fe-2S]-[ferredoxin]. It participates in protein modification; protein lipoylation via endogenous pathway; protein N(6)-(lipoyl)lysine from octanoyl-[acyl-carrier-protein]: step 2/2. Functionally, catalyzes the radical-mediated insertion of two sulfur atoms into the C-6 and C-8 positions of the octanoyl moiety bound to the lipoyl domains of lipoate-dependent enzymes, thereby converting the octanoylated domains into lipoylated derivatives. The sequence is that of Lipoyl synthase from Acidovorax ebreus (strain TPSY) (Diaphorobacter sp. (strain TPSY)).